A 939-amino-acid polypeptide reads, in one-letter code: Valine--tRNA ligase (939 aa).

The 'HIGH' region signature appears at 45 to 55 (PNVTGTLHMGH). Residues 549 to 553 (KMSKS) carry the 'KMSKS' region motif. K552 provides a ligand contact to ATP. Residues 876-939 (AAETARLRKE…KIRVQLVKLA (64 aa)) are a coiled coil.

The protein belongs to the class-I aminoacyl-tRNA synthetase family. ValS type 1 subfamily. In terms of assembly, monomer.

The protein resides in the cytoplasm. It catalyses the reaction tRNA(Val) + L-valine + ATP = L-valyl-tRNA(Val) + AMP + diphosphate. Its function is as follows. Catalyzes the attachment of valine to tRNA(Val). As ValRS can inadvertently accommodate and process structurally similar amino acids such as threonine, to avoid such errors, it has a 'posttransfer' editing activity that hydrolyzes mischarged Thr-tRNA(Val) in a tRNA-dependent manner. The sequence is that of Valine--tRNA ligase from Chromobacterium violaceum (strain ATCC 12472 / DSM 30191 / JCM 1249 / CCUG 213 / NBRC 12614 / NCIMB 9131 / NCTC 9757 / MK).